A 330-amino-acid polypeptide reads, in one-letter code: PDZ and LIM domain protein 4 (330 aa).

The PDZ domain occupies 1–84; sequence MTHSVTLRGP…HLTLSVSRPE (84 aa). 2 disordered regions span residues 104–153 and 219–242; these read DPES…SNEA and EAGE…ASKL. Phosphoserine occurs at positions 107, 111, 115, 118, 119, 124, and 134. Positions 108-122 are enriched in polar residues; sequence QDCSPATSRRSSVSG. The 51-residue stretch at 255–305 folds into the LIM zinc-binding domain; it reads CTRCGHGIVGTIVKARDKLYHPECFMCSDCGLNLKQRGYFFLDERLYCENH.

As to quaternary structure, homodimer. Interacts (via C-terminus only or via combined C-terminus and LIM domain, but not LIM domain only) with PTPN13 (via the second or fourth PDZ domains). Found in a complex with PTPN13 and TRIP6. Interacts (via PDZ domain) with ACTN1 and ACTN2 (via C-terminal SDL residues). Interacts (via PDZ domain) with TRIP6 (via the second LIM domain or via the third LIM domain plus C-terminus). Interacts (via LIM domain) with GRIA1 (via C-terminus); this interaction as well as the interaction with alpha-actinin is required for their colocalization in early endosomes. Interacts with PDLIM1. Forms (via LIM domain) a heterodimer with PDLIM3. Interacts directly with SRC (via kinase domain and to a lesser extent the SH2 domain). Post-translationally, phosphorylated on tyrosine residue(s). Can be dephosphorylated by PTPN13. As to expression, expressed in several non-muscle tissues including lung, brain, ovary and uterus, and especially in epithelial cells at 14 dpc. In the uterus, high expression in the glandular epithelium, but absent in the simple columnar epithelium lining the uterus cavity.

It localises to the cytoplasm. The protein localises to the cytoskeleton. It is found in the cell projection. The protein resides in the dendritic spine. Its subcellular location is the early endosome membrane. It localises to the recycling endosome membrane. The protein localises to the nucleus. It is found in the perinuclear region. The protein resides in the lamellipodium. Its subcellular location is the synapse. It localises to the synaptosome. In terms of biological role, suppresses SRC activation by recognizing and binding to active SRC and facilitating PTPN13-mediated dephosphorylation of SRC 'Tyr-419' leading to its inactivation. Inactivated SRC dissociates from this protein allowing the initiation of a new SRC inactivation cycle. Involved in reorganization of the actin cytoskeleton. In nonmuscle cells, binds to ACTN1 (alpha-actinin-1), increases the affinity of ACTN1 to F-actin (filamentous actin), and promotes formation of actin stress fibers. Involved in regulation of the synaptic AMPA receptor transport in dendritic spines of hippocampal pyramidal neurons directing the receptors toward an insertion at the postsynaptic membrane. Links endosomal surface-internalized GRIA1-containing AMPA receptors to the alpha-actinin/actin cytoskeleton. Increases AMPA receptor-mediated excitatory postsynaptic currents in neurons. The sequence is that of PDZ and LIM domain protein 4 (Pdlim4) from Mus musculus (Mouse).